Consider the following 207-residue polypeptide: Large ribosomal subunit protein uL4 (207 aa).

Residues 44 to 71 (RRQGTQSAKTRAEVRGGGRKPWKQKGTG) form a disordered region. Residues 60 to 71 (GGRKPWKQKGTG) show a composition bias toward basic residues.

Belongs to the universal ribosomal protein uL4 family. Part of the 50S ribosomal subunit.

One of the primary rRNA binding proteins, this protein initially binds near the 5'-end of the 23S rRNA. It is important during the early stages of 50S assembly. It makes multiple contacts with different domains of the 23S rRNA in the assembled 50S subunit and ribosome. Its function is as follows. Forms part of the polypeptide exit tunnel. The protein is Large ribosomal subunit protein uL4 of Alkaliphilus oremlandii (strain OhILAs) (Clostridium oremlandii (strain OhILAs)).